A 142-amino-acid polypeptide reads, in one-letter code: Transcription antitermination protein NusB (142 aa).

It belongs to the NusB family.

Functionally, involved in transcription antitermination. Required for transcription of ribosomal RNA (rRNA) genes. Binds specifically to the boxA antiterminator sequence of the ribosomal RNA (rrn) operons. This chain is Transcription antitermination protein NusB, found in Buchnera aphidicola subsp. Cinara cedri (strain Cc).